Reading from the N-terminus, the 343-residue chain is MSTATGFSRIFSGVQPTSDSLHLGNALGAITQWVALQYDHPDEYEAFFCVVDLHAITIAQDPETLWRRTLVTAAQYLALGIDPGRAVVFVQSHVPAHTQLAWVLGCFTGFGQASRMTQFKDKALRQGADSTTVGLFTYPVLQAADVLAYDTDLVPVGEDQRQHLELARDLAQRFNSRFPDTFVVPDMFIPKMAAKIYDLADPTSKMSKSASSDAGLINLLDDPALSVKKIRAAVTDSEREIRYDPEVKPGVSNLLNIQSAVTGVDVDTLVQRYVGHGYGDLKKDTAEAVVEFVSPIKDRVDELMADLTELEVVLAVGAQRAQDVAGKTMQRVYDRLGFLPQRG.

ATP-binding positions include 15 to 17 (QPT) and 24 to 25 (GN). Residues 16–25 (PTSDSLHLGN) carry the 'HIGH' region motif. Position 145 (D145) interacts with L-tryptophan. ATP is bound by residues 157-159 (GED), I196, and 205-209 (KMSKS). Positions 205 to 209 (KMSKS) match the 'KMSKS' region motif.

Belongs to the class-I aminoacyl-tRNA synthetase family. As to quaternary structure, homodimer.

It is found in the cytoplasm. The enzyme catalyses tRNA(Trp) + L-tryptophan + ATP = L-tryptophyl-tRNA(Trp) + AMP + diphosphate + H(+). Catalyzes the attachment of tryptophan to tRNA(Trp). The sequence is that of Tryptophan--tRNA ligase from Mycobacterium leprae (strain TN).